Here is a 150-residue protein sequence, read N- to C-terminus: L-alanine exporter AlaE (150 aa).

Transmembrane regions (helical) follow at residues Phe17–Met37, Leu48–Leu68, Leu86–Ala106, and Ile111–Tyr131.

This sequence belongs to the AlaE exporter family.

The protein resides in the cell inner membrane. In terms of biological role, exports L-alanine. The polypeptide is L-alanine exporter AlaE (Vibrio cholerae serotype O1 (strain ATCC 39315 / El Tor Inaba N16961)).